Reading from the N-terminus, the 166-residue chain is Mitochondrial fission process protein 1 (166 aa).

2 consecutive transmembrane segments (helical) span residues 34–54 (SLVP…YVLA) and 80–100 (AVVD…GFTI). Lys-123 is modified (N6-succinyllysine). A helical transmembrane segment spans residues 129-149 (LGLLTIPIIIHPIDRSVDFLL).

It belongs to the MTFP1 family.

The protein resides in the mitochondrion inner membrane. Its function is as follows. Involved in the mitochondrial division probably by regulating membrane fission. Loss-of-function induces the release of cytochrome c, which activates the caspase cascade and leads to apoptosis. In Homo sapiens (Human), this protein is Mitochondrial fission process protein 1 (MTFP1).